Reading from the N-terminus, the 265-residue chain is DNA repair protein RecO (265 aa).

The protein belongs to the RecO family.

Functionally, involved in DNA repair and RecF pathway recombination. In Mycobacterium marinum (strain ATCC BAA-535 / M), this protein is DNA repair protein RecO.